A 388-amino-acid chain; its full sequence is Succinate--CoA ligase [ADP-forming] subunit beta (388 aa).

Positions 9–244 (KQLFAEYGLP…PSQDDPREAH (236 aa)) constitute an ATP-grasp domain. Residues K46, 53–55 (GRG), E99, T102, and E107 contribute to the ATP site. Mg(2+) contacts are provided by N199 and D213. Substrate-binding positions include N264 and 321-323 (GIV).

It belongs to the succinate/malate CoA ligase beta subunit family. As to quaternary structure, heterotetramer of two alpha and two beta subunits. Mg(2+) serves as cofactor.

It carries out the reaction succinate + ATP + CoA = succinyl-CoA + ADP + phosphate. The catalysed reaction is GTP + succinate + CoA = succinyl-CoA + GDP + phosphate. The protein operates within carbohydrate metabolism; tricarboxylic acid cycle; succinate from succinyl-CoA (ligase route): step 1/1. In terms of biological role, succinyl-CoA synthetase functions in the citric acid cycle (TCA), coupling the hydrolysis of succinyl-CoA to the synthesis of either ATP or GTP and thus represents the only step of substrate-level phosphorylation in the TCA. The beta subunit provides nucleotide specificity of the enzyme and binds the substrate succinate, while the binding sites for coenzyme A and phosphate are found in the alpha subunit. The protein is Succinate--CoA ligase [ADP-forming] subunit beta of Pseudomonas putida (strain GB-1).